The primary structure comprises 292 residues: ATP phosphoribosyltransferase (292 aa).

This sequence belongs to the ATP phosphoribosyltransferase family. Long subfamily. Mg(2+) is required as a cofactor.

The protein resides in the cytoplasm. It carries out the reaction 1-(5-phospho-beta-D-ribosyl)-ATP + diphosphate = 5-phospho-alpha-D-ribose 1-diphosphate + ATP. It participates in amino-acid biosynthesis; L-histidine biosynthesis; L-histidine from 5-phospho-alpha-D-ribose 1-diphosphate: step 1/9. Feedback inhibited by histidine. In terms of biological role, catalyzes the condensation of ATP and 5-phosphoribose 1-diphosphate to form N'-(5'-phosphoribosyl)-ATP (PR-ATP). Has a crucial role in the pathway because the rate of histidine biosynthesis seems to be controlled primarily by regulation of HisG enzymatic activity. This is ATP phosphoribosyltransferase from Thermodesulfovibrio yellowstonii (strain ATCC 51303 / DSM 11347 / YP87).